A 194-amino-acid chain; its full sequence is Lysozyme g-like protein 1 (194 aa).

The first 19 residues, 1 to 19, serve as a signal peptide directing secretion; that stretch reads MSALWLLLGLLALMDLSES. Cystine bridges form between Cys-24–Cys-80 and Cys-38–Cys-49.

This sequence belongs to the glycosyl hydrolase 23 family.

The protein resides in the secreted. The sequence is that of Lysozyme g-like protein 1 (LYG1) from Homo sapiens (Human).